Consider the following 131-residue polypeptide: uncharacterized protein (131 aa).

Residues 4–44 adopt a coiled-coil conformation; the sequence is QKPEQDVNKKIEELEKKVQELQEQLEKTKQAVKTVASILDN.

This is an uncharacterized protein from Sulfolobus islandicus filamentous virus (isolate Iceland/Hveragerdi) (SIFV).